A 501-amino-acid polypeptide reads, in one-letter code: Envelope glycoprotein C homolog (501 aa).

The N-terminal stretch at 1–27 (MLTPRVLRALGWTGLFFLLLSPSNVLG) is a signal peptide. Residues 28–465 (ASLSRDLETP…DATPSARGTP (438 aa)) lie on the Virion surface side of the membrane. N46 is a glycosylation site (N-linked (GlcNAc...) asparagine; by host). The tract at residues 53–87 (PLTEVPHAPSTESVSTNSESTNEHTITETTGKNAY) is disordered. Residues 62–72 (STESVSTNSES) show a composition bias toward low complexity. N91, N100, N120, N212, N354, N400, and N429 each carry an N-linked (GlcNAc...) asparagine; by host glycan. The 99-residue stretch at 258 to 356 (PASVDVLAPP…GDMISTTNAT (99 aa)) folds into the Ig-like domain. The helical transmembrane segment at 466 to 492 (MVITVTAVLGLAVILGMGIIMTALCLY) threads the bilayer. The Cytoplasmic portion of the chain corresponds to 493–501 (NSTRKNIRL).

The protein belongs to the herpesviridae glycoprotein C family.

It is found in the secreted. Its subcellular location is the host cell membrane. Its function is as follows. May play an immunoevasive role in the pathogenesis of Marek's disease. It is a candidate for causing the early-stage immunosuppression that occurs after MDHV infection. The sequence is that of Envelope glycoprotein C homolog (gC) from Gallus gallus (Chicken).